The chain runs to 671 residues: DNA ligase (671 aa).

NAD(+) is bound by residues 32–36 (DAEYD), 81–82 (SL), and glutamate 113. Lysine 115 (N6-AMP-lysine intermediate) is an active-site residue. Positions 136, 173, 290, and 314 each coordinate NAD(+). Zn(2+)-binding residues include cysteine 408, cysteine 411, cysteine 426, and cysteine 432. A BRCT domain is found at 593 to 671 (EIDSPFAGKT…EAEMIRLLGA (79 aa)).

The protein belongs to the NAD-dependent DNA ligase family. LigA subfamily. Mg(2+) is required as a cofactor. It depends on Mn(2+) as a cofactor.

The catalysed reaction is NAD(+) + (deoxyribonucleotide)n-3'-hydroxyl + 5'-phospho-(deoxyribonucleotide)m = (deoxyribonucleotide)n+m + AMP + beta-nicotinamide D-nucleotide.. Its function is as follows. DNA ligase that catalyzes the formation of phosphodiester linkages between 5'-phosphoryl and 3'-hydroxyl groups in double-stranded DNA using NAD as a coenzyme and as the energy source for the reaction. It is essential for DNA replication and repair of damaged DNA. This Salmonella paratyphi C (strain RKS4594) protein is DNA ligase.